Reading from the N-terminus, the 122-residue chain is Large ribosomal subunit protein uL14 (122 aa).

The protein belongs to the universal ribosomal protein uL14 family. In terms of assembly, part of the 50S ribosomal subunit. Forms a cluster with proteins L3 and L19. In the 70S ribosome, L14 and L19 interact and together make contacts with the 16S rRNA in bridges B5 and B8.

Its function is as follows. Binds to 23S rRNA. Forms part of two intersubunit bridges in the 70S ribosome. This chain is Large ribosomal subunit protein uL14, found in Bordetella avium (strain 197N).